The chain runs to 201 residues: 3-isopropylmalate dehydratase small subunit (201 aa).

The protein belongs to the LeuD family. LeuD type 1 subfamily. As to quaternary structure, heterodimer of LeuC and LeuD.

The enzyme catalyses (2R,3S)-3-isopropylmalate = (2S)-2-isopropylmalate. Its pathway is amino-acid biosynthesis; L-leucine biosynthesis; L-leucine from 3-methyl-2-oxobutanoate: step 2/4. In terms of biological role, catalyzes the isomerization between 2-isopropylmalate and 3-isopropylmalate, via the formation of 2-isopropylmaleate. The chain is 3-isopropylmalate dehydratase small subunit from Shigella flexneri serotype 5b (strain 8401).